A 320-amino-acid chain; its full sequence is Ferrochelatase (320 aa).

Positions 194 and 275 each coordinate Fe cation.

It belongs to the ferrochelatase family. Monomer.

The protein resides in the cytoplasm. The enzyme catalyses heme b + 2 H(+) = protoporphyrin IX + Fe(2+). It participates in porphyrin-containing compound metabolism; protoheme biosynthesis; protoheme from protoporphyrin-IX: step 1/1. Functionally, catalyzes the ferrous insertion into protoporphyrin IX. This is Ferrochelatase from Shigella boydii serotype 18 (strain CDC 3083-94 / BS512).